A 278-amino-acid polypeptide reads, in one-letter code: Pyrroline-5-carboxylate reductase 2 (278 aa).

Belongs to the pyrroline-5-carboxylate reductase family.

Its subcellular location is the cytoplasm. The catalysed reaction is L-proline + NADP(+) = (S)-1-pyrroline-5-carboxylate + NADPH + 2 H(+). It carries out the reaction L-proline + NAD(+) = (S)-1-pyrroline-5-carboxylate + NADH + 2 H(+). The protein operates within amino-acid biosynthesis; L-proline biosynthesis; L-proline from L-glutamate 5-semialdehyde: step 1/1. In terms of biological role, catalyzes the reduction of 1-pyrroline-5-carboxylate (PCA) to L-proline. This Bacillus subtilis (strain 168) protein is Pyrroline-5-carboxylate reductase 2 (proI).